The primary structure comprises 914 residues: WAG22 antigen (914 aa).

Positions 1–93 (MSFVIAVPET…GGAYAAAEAA (93 aa)) constitute a PE domain. 2 disordered regions span residues 412–431 (GGSG…AGGA) and 895–914 (AGAG…HGLT). Gly residues predominate over residues 895-904 (AGAGGAGGLV).

It belongs to the mycobacterial PE family. PGRS subfamily.

The polypeptide is WAG22 antigen (wag22) (Mycobacterium bovis (strain ATCC BAA-935 / AF2122/97)).